The chain runs to 548 residues: MKKYYAVTGIALAVGMLCTTQLAGATQAADPSVGSLDSSNVVTEFSAQGNVEQITFKSAIKSAPMSSARSAQTSAIIPGLKNLFVSAPGSDFSLNDSSNNYIKRFTQNIAGIPVLGSSITEVLDGQGAVTSAIGAVTSATKGAFPADLAAGQAAALASATKIASAGKDASAISLVDQKAIWFDAVLIGKGATGSVAVPAYQFSFTTGFAESRVLTVAANDGAILNDRTDRKDINRVVCDANSKVIDLEASNADALLKCGKTQANKPTRIEGQAASSVADVNSVYNFLNDTASFYGANTKANDLTALIGNDEGDGLGKAMRAVVRICVTDSQNGEQCPFANAFWYNGQMTYGQGVTTDDITGHELTHGVTEKTNGLVYANESGAINESMSDVFGEFIDLSNGSSDDTAANRWAIGEGSSLGVIRSMKDPGKYGEPAIYKGSNWKPTATNPNDNNDQGGVHSNSGVGNKLAFLITDGQTFNGQTVTGIGIAKAAQLYWAAQRQLTANATYSSLGKALNSACSANVSNNVAGTTAANCTQVANAIKAVGIK.

The N-terminal stretch at 1-28 (MKKYYAVTGIALAVGMLCTTQLAGATQA) is a signal peptide. Residue histidine 362 coordinates Zn(2+). The active site involves glutamate 363. Histidine 366 and glutamate 386 together coordinate Zn(2+). A disordered region spans residues 440–459 (SNWKPTATNPNDNNDQGGVH). A compositionally biased stretch (polar residues) spans 442 to 459 (WKPTATNPNDNNDQGGVH). The active-site Proton donor is histidine 459.

It belongs to the peptidase M4 family. Ca(2+) serves as cofactor. The cofactor is Zn(2+).

Its subcellular location is the secreted. The protein resides in the cell wall. In terms of biological role, zinc metalloprotease with hemolytic properties. This chain is Zinc metalloproteinase (hly), found in Renibacterium salmoninarum.